The following is a 517-amino-acid chain: Glycerol kinase 5 (517 aa).

ATP-binding residues include S23 and T24. Glycerol-binding residues include R93, D270, and Q271. 3 residues coordinate ATP: T292, G335, and G432.

This sequence belongs to the FGGY kinase family.

It localises to the cytoplasm. It carries out the reaction glycerol + ATP = sn-glycerol 3-phosphate + ADP + H(+). It functions in the pathway polyol metabolism; glycerol degradation via glycerol kinase pathway; sn-glycerol 3-phosphate from glycerol: step 1/1. Functionally, skin-specific kinase that plays a key role in glycerol metabolism, catalyzing its phosphorylation to produce sn-glycerol 3-phosphate. Involved in skin-specific regulation of sterol regulatory element-binding protein (SREBP) processing and lipid biosynthesis. In Gallus gallus (Chicken), this protein is Glycerol kinase 5 (GK5).